The following is a 500-amino-acid chain: Versicolorin B desaturase (500 aa).

Residues 3-23 (FLSLPSLVIVIPVGYLLFHLG) traverse the membrane as a helical segment. N-linked (GlcNAc...) asparagine glycosylation is found at asparagine 243 and asparagine 400. Cysteine 438 is a binding site for heme.

The protein belongs to the cytochrome P450 family. The cofactor is heme.

Its subcellular location is the membrane. It carries out the reaction versicolorin B + NADPH + O2 + H(+) = versicolorin A + NADP(+) + 2 H2O. It functions in the pathway mycotoxin biosynthesis; aflatoxin biosynthesis. In terms of biological role, versicolorin B desaturase; part of the gene cluster that mediates the biosynthesis of aflatoxins, a group of polyketide-derived furanocoumarins, and part of the most toxic and carcinogenic compounds among the known mycotoxins. The four major aflatoxins produced by A.parasiticus are aflatoxin B1 (AFB1), aflatoxin B2 (AFB2), aflatoxin G1 (AFG1) and aflatoxin G2 (AFG2). Within the aflatoxin pathway, the versicolorin B desaturase aflL catalyzes the conversion of versicolorin B (VERB) to versicolorin A (VERA). The biosynthesis of aflatoxins begins with the norsolorinic acid synthase aflC that combines a hexanoyl starter unit produced by the fatty acid synthase aflA/aflB and 7 malonyl-CoA extender units to synthesize the precursor NOR. The second step is the conversion of NOR to averantin and requires the norsolorinic acid ketoreductase aflD, which catalyzes the dehydration of norsolorinic acid to form (1'S)-averantin. The norsolorinic acid reductases aflE and aflF may also play a role in the conversion of NOR to AVN. The cytochrome P450 monooxygenase aflG then catalyzes the hydroxylation of AVN to 5'hydroxyaverantin (HAVN). The next step is performed by the 5'-hydroxyaverantin dehydrogenase aflH that transforms HAVN to 5'-oxoaverantin (OAVN) which is further converted to averufin (AVF) by aflK that plays a dual role in the pathway, as a 5'-oxoaverantin cyclase that mediates conversion of 5'-oxoaverantin, as well as a versicolorin B synthase in a later step in the pathway. The averufin oxidase aflI catalyzes the conversion of AVF to versiconal hemiacetal acetate (VHA). VHA is then the substrate for the versiconal hemiacetal acetate esterase aflJ to yield versiconal (VAL). Versicolorin B synthase aflK then converts VAL to versicolorin B (VERB) by closing the bisfuran ring of aflatoxin which is required for DNA-binding, thus giving to aflatoxin its activity as a mutagen. Then, the activity of the versicolorin B desaturase aflL leads to versicolorin A (VERA). A branch point starts from VERB since it can also be converted to dihydrodemethylsterigmatocystin (DMDHST), probably also by aflL, VERA being a precursor for aflatoxins B1 and G1, and DMDHST for aflatoxins B2 and G2. Next, the versicolorin reductase aflM and the cytochrome P450 monooxygenase aflN are involved in conversion of VERA to demethylsterigmatocystin (DMST). AflX and aflY seem also involved in this step, through probable aflX-mediated epoxide ring-opening step following versicolorin A oxidation and aflY-mediated Baeyer-Villiger oxidation required for the formation of the xanthone ring. The methyltransferase aflO then leads to the modification of DMST to sterigmatocystin (ST), and of DMDHST to dihydrosterigmatocystin (DHST). Both ST and DHST are then substrates of the O-methyltransferase aflP to yield O-methylsterigmatocystin (OMST) and dihydro-O-methylsterigmatocystin (DHOMST), respectively. Finally OMST is converted to aflatoxins B1 and G1, and DHOMST to aflatoxins B2 and G2, via the action of several enzymes including O-methylsterigmatocystin oxidoreductase aflQ, the cytochrome P450 monooxygenase aflU, but also the NADH-dependent flavin oxidoreductase nadA which is specifically required for the synthesis of AFG1. The polypeptide is Versicolorin B desaturase (Aspergillus parasiticus (strain ATCC 56775 / NRRL 5862 / SRRC 143 / SU-1)).